We begin with the raw amino-acid sequence, 219 residues long: Pyridoxine/pyridoxamine 5'-phosphate oxidase (219 aa).

Substrate-binding positions include 15–18 and K73; that span reads RRDY. FMN is bound by residues 68–73, 83–84, R89, K90, and Q112; these read RMVLLK and YT. Substrate-binding residues include Y130, R134, and S138. FMN is bound by residues 147–148 and W192; that span reads QS. 198–200 contributes to the substrate binding site; the sequence is RLH. R202 contributes to the FMN binding site.

It belongs to the pyridoxamine 5'-phosphate oxidase family. As to quaternary structure, homodimer. It depends on FMN as a cofactor.

It carries out the reaction pyridoxamine 5'-phosphate + O2 + H2O = pyridoxal 5'-phosphate + H2O2 + NH4(+). The enzyme catalyses pyridoxine 5'-phosphate + O2 = pyridoxal 5'-phosphate + H2O2. Its pathway is cofactor metabolism; pyridoxal 5'-phosphate salvage; pyridoxal 5'-phosphate from pyridoxamine 5'-phosphate: step 1/1. It participates in cofactor metabolism; pyridoxal 5'-phosphate salvage; pyridoxal 5'-phosphate from pyridoxine 5'-phosphate: step 1/1. Catalyzes the oxidation of either pyridoxine 5'-phosphate (PNP) or pyridoxamine 5'-phosphate (PMP) into pyridoxal 5'-phosphate (PLP). The chain is Pyridoxine/pyridoxamine 5'-phosphate oxidase from Acaryochloris marina (strain MBIC 11017).